Here is a 366-residue protein sequence, read N- to C-terminus: Phenylalanine dehydrogenase (366 aa).

An NAD(+)-binding site is contributed by R45. L-phenylalanine is bound at residue K69. K81 is an active-site residue. Residues D116, T151, 181–187, 204–205, 241–242, and 262–264 contribute to the NAD(+) site; these read GVGKVGE, DI, AK, and SAN. An L-phenylalanine-binding site is contributed by N264.

Belongs to the Glu/Leu/Phe/Val dehydrogenases family.

It catalyses the reaction L-phenylalanine + NAD(+) + H2O = 3-phenylpyruvate + NH4(+) + NADH + H(+). It participates in amino-acid biosynthesis; L-phenylalanine biosynthesis; L-phenylalanine from phenylpyruvate (PDH route): step 1/1. In terms of biological role, catalyzes the reversible NAD(+)-dependent oxidative deamination of L-phenylalanine to phenylpyruvate. This Thermoactinomyces intermedius protein is Phenylalanine dehydrogenase.